Reading from the N-terminus, the 1162-residue chain is Enhanced level of genomic instability 1 (1162 aa).

Disordered regions lie at residues 1–136 (MTDV…ADNQ), 144–163 (KAGK…KPKP), 179–202 (LGVN…ATPT), 249–319 (KTDA…TKKR), 348–380 (METP…RRSC), 611–634 (RSME…PNGE), and 666–697 (WSGN…SSSN). A compositionally biased stretch (basic residues) spans 65 to 78 (KQKHREKHKRKREE). Residues 79–111 (KRRAALMEDQKSTTEEVKANAKEKPQPLREKSS) are compositionally biased toward basic and acidic residues. The segment covering 125–136 (PLKSSTPVADNQ) has biased composition (polar residues). A compositionally biased stretch (basic residues) spans 268–278 (KRLRGRPRSRR). Composition is skewed to low complexity over residues 666-676 (WSGNGGSNRNS) and 684-697 (DMSN…SSSN). 703–710 (GPSSSGKT) serves as a coordination point for ATP. 2 disordered regions span residues 900 to 923 (GDST…SRLA) and 975 to 1008 (QAAG…SDGH). The segment covering 984 to 993 (AAKRKSRSPK) has biased composition (basic residues). A compositionally biased stretch (polar residues) spans 998-1008 (SSATGQKSDGH).

It belongs to the ELG1 family. Component of a heteropentameric Elg1 RFC-like complex composed of one large subunit (elg1) and four small subunits (RfC4, RfC38, CG8142 and RfC3). As part of the complex, might interact with the Enok complex, composed of enok, Br140, Eaf6 and Ing5. Within the Enok complex, interacts directly with Br140. As to expression, expressed at higher levels in the germline nurse cells than in the somatic follicle cells.

It localises to the nucleus. In terms of biological role, has an important role in DNA replication and in maintaining genome integrity during replication stress. Promotes PCNA deubiquitination. As component of the Elg1 RFC-like complex, regulates the functions of the DNA polymerase processivity factor PCNA by unloading it from DNA after replication during the S phase of the cell cycle. The PCNA-unloading might be regulated via interaction with the Enok acetyltransferase complex. Might have a role in restarting of stalled/regressed replication forks during replication stress. In the ovaries, has a role in nurse cell endoreplication. The sequence is that of Enhanced level of genomic instability 1 from Drosophila melanogaster (Fruit fly).